The chain runs to 640 residues: Chaperone protein HtpG (640 aa).

An a; substrate-binding region spans residues 1–348 (MADVAHQETH…SNDLPLNVSR (348 aa)). Positions 349–565 (EILQDNKITQ…GTGMSTQMIK (217 aa)) are b. A c region spans residues 566-640 (LMQAAGQPVP…LNTLLMNLAK (75 aa)).

It belongs to the heat shock protein 90 family. In terms of assembly, homodimer.

The protein resides in the cytoplasm. Functionally, molecular chaperone. Has ATPase activity. The sequence is that of Chaperone protein HtpG from Pseudoalteromonas atlantica (strain T6c / ATCC BAA-1087).